Here is a 385-residue protein sequence, read N- to C-terminus: 1-deoxy-D-xylulose 5-phosphate reductoisomerase (385 aa).

Positions 10, 11, 12, 13, 36, 38, and 122 each coordinate NADPH. K123 lines the 1-deoxy-D-xylulose 5-phosphate pocket. E124 is an NADPH binding site. Residue D148 participates in Mn(2+) binding. The 1-deoxy-D-xylulose 5-phosphate site is built by S149, E150, S174, and H197. E150 contacts Mn(2+). G203 is a binding site for NADPH. 1-deoxy-D-xylulose 5-phosphate contacts are provided by S210, N215, K216, and E219. Residue E219 participates in Mn(2+) binding.

The protein belongs to the DXR family. It depends on Mg(2+) as a cofactor. The cofactor is Mn(2+).

It catalyses the reaction 2-C-methyl-D-erythritol 4-phosphate + NADP(+) = 1-deoxy-D-xylulose 5-phosphate + NADPH + H(+). Its pathway is isoprenoid biosynthesis; isopentenyl diphosphate biosynthesis via DXP pathway; isopentenyl diphosphate from 1-deoxy-D-xylulose 5-phosphate: step 1/6. Functionally, catalyzes the NADPH-dependent rearrangement and reduction of 1-deoxy-D-xylulose-5-phosphate (DXP) to 2-C-methyl-D-erythritol 4-phosphate (MEP). This is 1-deoxy-D-xylulose 5-phosphate reductoisomerase from Geobacter sp. (strain M21).